We begin with the raw amino-acid sequence, 330 residues long: Homeobox protein Hox-C13 (330 aa).

Over residues 30–47 (GGGGGGGGGTGGAGGGCS) the composition is skewed to gly residues. Positions 30 to 50 (GGGGGGGGGTGGAGGGCSGAS) are disordered. The homeobox DNA-binding region spans 260–319 (GRKKRVPYTKVQLKELEKEYAASKFITKEKRRRISATTNLSERQVTIWFQNRRVKEKKVV).

It belongs to the Abd-B homeobox family.

It is found in the nucleus. In terms of biological role, transcription factor which plays a role in hair follicle differentiation. Regulates FOXQ1 expression and that of other hair-specific genes. This Homo sapiens (Human) protein is Homeobox protein Hox-C13 (HOXC13).